Consider the following 650-residue polypeptide: Acetyl-coenzyme A synthetase (650 aa).

Residues 190–193, threonine 308, and asparagine 332 contribute to the CoA site; that span reads RGGR. Residues 384-386, 408-413, aspartate 497, and arginine 512 each bind ATP; these read GEP and DTWWQT. Residue serine 520 coordinates CoA. An ATP-binding site is contributed by arginine 523. 3 residues coordinate Mg(2+): valine 534, histidine 536, and valine 539. Arginine 581 provides a ligand contact to CoA. At lysine 606 the chain carries N6-acetyllysine.

This sequence belongs to the ATP-dependent AMP-binding enzyme family. Requires Mg(2+) as cofactor. Post-translationally, acetylated. Deacetylation by the SIR2-homolog deacetylase activates the enzyme.

It catalyses the reaction acetate + ATP + CoA = acetyl-CoA + AMP + diphosphate. Functionally, catalyzes the conversion of acetate into acetyl-CoA (AcCoA), an essential intermediate at the junction of anabolic and catabolic pathways. AcsA undergoes a two-step reaction. In the first half reaction, AcsA combines acetate with ATP to form acetyl-adenylate (AcAMP) intermediate. In the second half reaction, it can then transfer the acetyl group from AcAMP to the sulfhydryl group of CoA, forming the product AcCoA. This chain is Acetyl-coenzyme A synthetase, found in Bradyrhizobium sp. (strain ORS 278).